The sequence spans 1133 residues: Lon protease homolog, mitochondrial (1133 aa).

The transit peptide at Met1–Phe37 directs the protein to the mitochondrion. The propeptide at Ala38–Ala98 is removed in mature form; by autocatalysis. Basic and acidic residues-rich tracts occupy residues Ala98–Glu117 and Glu125–Lys143. Disordered stretches follow at residues Ala98–Pro176 and Glu282–Ile358. The span at Ser145–Ser166 shows a compositional bias: low complexity. Positions Met182–Leu480 constitute a Lon N-terminal domain. Composition is skewed to basic and acidic residues over residues Glu282–Asp301 and Lys325–Gln340. Residues Thr348–Ile358 are compositionally biased toward acidic residues. Gly632–Thr639 lines the ATP pocket. The dispensable for catalytic activity stretch occupies residues Lys839 to Lys892. Positions Glu844–Glu889 are disordered. The span at Ser853–Glu889 shows a compositional bias: basic and acidic residues. Residues Thr923–Asp1109 enclose the Lon proteolytic domain. Active-site residues include Ser1015 and Lys1058.

Belongs to the peptidase S16 family. In terms of assembly, homohexamer. Organized in a ring with a central cavity. The ATP-binding and proteolytic domains (AP-domain) form a hexameric chamber. Oligomerization is independent of its proteolytic activity and the autocatalytic maturation of its subunits.

It localises to the mitochondrion matrix. The catalysed reaction is Hydrolysis of proteins in presence of ATP.. In terms of biological role, ATP-dependent serine protease that mediates the selective degradation of misfolded, unassembled or oxidatively damaged polypeptides as well as certain short-lived regulatory proteins in the mitochondrial matrix. May also have a chaperone function in the assembly of inner membrane protein complexes. Participates in the regulation of mitochondrial gene expression and in the maintenance of the integrity of the mitochondrial genome. Binds to mitochondrial DNA in a site-specific manner. Endogenous substrates include ABF2, ACO2, ILV1, ILV2, LSC1, LYS4, MGM101 and several oxidized proteins. The 2 nucleic acid-binding proteins ABF2 and MGM101 are protected from degradation by PIM1 when they are bound to DNA. This chain is Lon protease homolog, mitochondrial, found in Saccharomyces cerevisiae (strain ATCC 204508 / S288c) (Baker's yeast).